The primary structure comprises 382 residues: Pyrimidine monooxygenase RutA (382 aa).

FMN contacts are provided by residues 68-69, Asn134, Glu143, 159-160, and Ser209; these read IK and RY.

This sequence belongs to the NtaA/SnaA/DszA monooxygenase family. RutA subfamily.

It carries out the reaction uracil + FMNH2 + NADH + O2 = (Z)-3-ureidoacrylate + FMN + NAD(+) + H2O + H(+). The enzyme catalyses thymine + FMNH2 + NADH + O2 = (Z)-2-methylureidoacrylate + FMN + NAD(+) + H2O + H(+). Catalyzes the pyrimidine ring opening between N-3 and C-4 by an unusual flavin hydroperoxide-catalyzed mechanism, adding oxygen atoms in the process to yield ureidoacrylate peracid, that immediately reacts with FMN forming ureidoacrylate and FMN-N(5)-oxide. The FMN-N(5)-oxide reacts spontaneously with NADH to produce FMN. Requires the flavin reductase RutF to regenerate FMN in vivo. The polypeptide is Pyrimidine monooxygenase RutA (Escherichia coli O150:H5 (strain SE15)).